Reading from the N-terminus, the 280-residue chain is HCLS1-associated protein X-1 (280 aa).

Ser-2 is subject to N-acetylserine. The segment at 2–45 (SVFDLFRGFFGFPGPRSHRDPFFGGMTRDDDDDDDDDDEAEEDR) is required for localization in mitochondria. Disordered stretches follow at residues 12–70 (GFPG…SFSP) and 100–263 (TLPS…SALD). A compositionally biased stretch (acidic residues) spans 30 to 43 (DDDDDDDDDDEAEE). An involved in HCLS1 binding region spans residues 115–280 (TPGERLREGQ…LLLGRWFRSR (166 aa)). 2 stretches are compositionally biased toward basic and acidic residues: residues 116-125 (PGERLREGQT) and 134-154 (PDSH…KPES). Residues 176–207 (VSPHSRAKEDKDLDSQVSQEGLGPLLQPQPKS) are involved in CASP9 binding. The segment at 177–248 (SPHSRAKEDK…TTVTHQEAHD (72 aa)) is involved in GNA13 binding. The tract at residues 184-280 (EDKDLDSQVS…LLLGRWFRSR (97 aa)) is required for localization in sarcoplasmic reticulum. Residues 185–280 (DKDLDSQVSQ…LLLGRWFRSR (96 aa)) are involved in PKD2 binding. Residues Ser-190 and Ser-193 each carry the phosphoserine modification. Positions 204-226 (QPKSYFKSISVTKITKPDGTVEE) are involved in PLN binding. An involved in ATP2A2 binding region spans residues 204-246 (QPKSYFKSISVTKITKPDGTVEERRTVVDSEGRRETTVTHQEA). A mediates interaction with UCP3 region spans residues 211–280 (SISVTKITKP…LLLGRWFRSR (70 aa)). Residues 218–256 (TKPDGTVEERRTVVDSEGRRETTVTHQEAHDSSRSDPDS) are compositionally biased toward basic and acidic residues. The segment at 271 to 280 (LLLGRWFRSR) is required for ITGB6 binding.

This sequence belongs to the HAX1 family. Interacts with ABCB1, ABCB4 and ABCB11. Directly associates with HCLS1/HS1, through binding to its N-terminal region. Interacts with CTTN. Interacts with PKD2. Interacts with GNA13. Interacts with CASP9. Interacts with ITGB6. Interacts with PLN and ATP2A2; these interactions are inhibited by calcium. Interacts with GRB7. Interacts (via C-terminus) with XIAP/BIRC4 (via BIR 2 domain and BIR 3 domain) and this interaction blocks ubiquitination of XIAP/BIRC4. Interacts with TPC2. Interacts with KCNC3. Interacts with XPO1. Interacts with RNF217. Interacts with UCP3; the interaction is direct and calcium-dependent. Interacts with MAPRE2; this interaction regulates cell migration in keratinocytes. As to expression, ubiquitous, with highest levels in kidney and liver (at protein level).

The protein localises to the mitochondrion matrix. Its subcellular location is the endoplasmic reticulum. The protein resides in the nucleus membrane. It is found in the cytoplasmic vesicle. It localises to the cytoplasm. The protein localises to the cell cortex. Its subcellular location is the cell membrane. The protein resides in the sarcoplasmic reticulum. It is found in the P-body. It localises to the nucleus. Recruits the Arp2/3 complex to the cell cortex and regulates reorganization of the cortical actin cytoskeleton via its interaction with KCNC3 and the Arp2/3 complex. Slows down the rate of inactivation of KCNC3 channels. Promotes GNA13-mediated cell migration. Involved in the clathrin-mediated endocytosis pathway. May be involved in internalization of ABC transporters such as ABCB11. May inhibit CASP9 and CASP3. Promotes cell survival. May regulate intracellular calcium pools. The chain is HCLS1-associated protein X-1 (Hax1) from Mus musculus (Mouse).